The following is a 100-amino-acid chain: Large ribosomal subunit protein uL23 (100 aa).

The protein belongs to the universal ribosomal protein uL23 family. In terms of assembly, part of the 50S ribosomal subunit. Contacts protein L29, and trigger factor when it is bound to the ribosome.

One of the early assembly proteins it binds 23S rRNA. One of the proteins that surrounds the polypeptide exit tunnel on the outside of the ribosome. Forms the main docking site for trigger factor binding to the ribosome. The protein is Large ribosomal subunit protein uL23 of Prochlorococcus marinus (strain MIT 9313).